The following is a 531-amino-acid chain: Endoglucanase 7 (531 aa).

Residues 1 to 27 (MRGRALVLVAALLLQLLLLAAAGGAGA) form the signal peptide. The active-site Nucleophile is aspartate 89. Residues histidine 430, aspartate 482, and glutamate 491 contribute to the active site.

The protein belongs to the glycosyl hydrolase 9 (cellulase E) family. As to expression, ubiquitous.

Its subcellular location is the secreted. It catalyses the reaction Endohydrolysis of (1-&gt;4)-beta-D-glucosidic linkages in cellulose, lichenin and cereal beta-D-glucans.. This chain is Endoglucanase 7 (GLU10), found in Oryza sativa subsp. japonica (Rice).